Reading from the N-terminus, the 517-residue chain is Probable bifunctional methylthioribulose-1-phosphate dehydratase/enolase-phosphatase E1 1 (517 aa).

Residues 1–240 are methylthioribulose-1-phosphate dehydratase; sequence MAAAALNGLK…AIKLYQLGLD (240 aa). Residue C112 participates in substrate binding. Residues H130 and H132 each coordinate Zn(2+). E155 (proton donor/acceptor; for methylthioribulose-1-phosphate dehydratase activity) is an active-site residue. Position 205 (H205) interacts with Zn(2+). An enolase-phosphatase E1 region spans residues 278–517; sequence IVLDIEGTTT…FKTITSFSDI (240 aa). The Mg(2+) site is built by D281 and E283. Residues 416–417 and K450 each bind substrate; that span reads SS. D476 contributes to the Mg(2+) binding site.

This sequence in the N-terminal section; belongs to the aldolase class II family. MtnB subfamily. It in the C-terminal section; belongs to the HAD-like hydrolase superfamily. MasA/MtnC family. Zn(2+) serves as cofactor. Requires Mg(2+) as cofactor.

The enzyme catalyses 5-(methylsulfanyl)-D-ribulose 1-phosphate = 5-methylsulfanyl-2,3-dioxopentyl phosphate + H2O. It catalyses the reaction 5-methylsulfanyl-2,3-dioxopentyl phosphate + H2O = 1,2-dihydroxy-5-(methylsulfanyl)pent-1-en-3-one + phosphate. Its pathway is amino-acid biosynthesis; L-methionine biosynthesis via salvage pathway; L-methionine from S-methyl-5-thio-alpha-D-ribose 1-phosphate: step 2/6. It functions in the pathway amino-acid biosynthesis; L-methionine biosynthesis via salvage pathway; L-methionine from S-methyl-5-thio-alpha-D-ribose 1-phosphate: step 3/6. The protein operates within amino-acid biosynthesis; L-methionine biosynthesis via salvage pathway; L-methionine from S-methyl-5-thio-alpha-D-ribose 1-phosphate: step 4/6. This chain is Probable bifunctional methylthioribulose-1-phosphate dehydratase/enolase-phosphatase E1 1, found in Vitis vinifera (Grape).